The primary structure comprises 555 residues: Potassium-transporting ATPase potassium-binding subunit (555 aa).

10 consecutive transmembrane segments (helical) span residues Ile2–Val22, Gln60–Phe80, Ile130–Phe150, Val173–Thr193, Met246–Tyr266, Ile278–Glu298, Ala374–Val394, Leu412–Leu432, Leu483–Leu503, and Gly525–Leu545.

It belongs to the KdpA family. The system is composed of three essential subunits: KdpA, KdpB and KdpC.

The protein localises to the cell membrane. Its function is as follows. Part of the high-affinity ATP-driven potassium transport (or Kdp) system, which catalyzes the hydrolysis of ATP coupled with the electrogenic transport of potassium into the cytoplasm. This subunit binds the extracellular potassium ions and delivers the ions to the membrane domain of KdpB through an intramembrane tunnel. This Bacillus cereus (strain B4264) protein is Potassium-transporting ATPase potassium-binding subunit.